Consider the following 565-residue polypeptide: Proline--tRNA ligase (565 aa).

The protein belongs to the class-II aminoacyl-tRNA synthetase family. ProS type 1 subfamily. In terms of assembly, homodimer.

It localises to the cytoplasm. The enzyme catalyses tRNA(Pro) + L-proline + ATP = L-prolyl-tRNA(Pro) + AMP + diphosphate. Catalyzes the attachment of proline to tRNA(Pro) in a two-step reaction: proline is first activated by ATP to form Pro-AMP and then transferred to the acceptor end of tRNA(Pro). As ProRS can inadvertently accommodate and process non-cognate amino acids such as alanine and cysteine, to avoid such errors it has two additional distinct editing activities against alanine. One activity is designated as 'pretransfer' editing and involves the tRNA(Pro)-independent hydrolysis of activated Ala-AMP. The other activity is designated 'posttransfer' editing and involves deacylation of mischarged Ala-tRNA(Pro). The misacylated Cys-tRNA(Pro) is not edited by ProRS. The chain is Proline--tRNA ligase from Lactobacillus helveticus (strain DPC 4571).